Here is a 159-residue protein sequence, read N- to C-terminus: UPF0336 protein ML1910 (159 aa).

This sequence belongs to the UPF0336 family.

This is UPF0336 protein ML1910 from Mycobacterium leprae (strain TN).